The sequence spans 348 residues: Nicotinate-nucleotide--dimethylbenzimidazole phosphoribosyltransferase (348 aa).

Glu-316 functions as the Proton acceptor in the catalytic mechanism.

It belongs to the CobT family.

It catalyses the reaction 5,6-dimethylbenzimidazole + nicotinate beta-D-ribonucleotide = alpha-ribazole 5'-phosphate + nicotinate + H(+). The protein operates within nucleoside biosynthesis; alpha-ribazole biosynthesis; alpha-ribazole from 5,6-dimethylbenzimidazole: step 1/2. Its function is as follows. Catalyzes the synthesis of alpha-ribazole-5'-phosphate from nicotinate mononucleotide (NAMN) and 5,6-dimethylbenzimidazole (DMB). The chain is Nicotinate-nucleotide--dimethylbenzimidazole phosphoribosyltransferase from Xanthomonas oryzae pv. oryzae (strain PXO99A).